The chain runs to 314 residues: Acetaldehyde dehydrogenase 1 (314 aa).

16–19 (SGNI) serves as a coordination point for NAD(+). Cys134 acts as the Acyl-thioester intermediate in catalysis. Residues 165 to 173 (SAGPGTRAN) and Asn292 contribute to the NAD(+) site.

The protein belongs to the acetaldehyde dehydrogenase family.

The enzyme catalyses acetaldehyde + NAD(+) + CoA = acetyl-CoA + NADH + H(+). The chain is Acetaldehyde dehydrogenase 1 (mhpF) from Cupriavidus necator (strain ATCC 17699 / DSM 428 / KCTC 22496 / NCIMB 10442 / H16 / Stanier 337) (Ralstonia eutropha).